The sequence spans 215 residues: Peroxiredoxin-5, mitochondrial (215 aa).

A mitochondrion-targeting transit peptide spans 1–53; it reads MGLAGVCVLRRSAGYILGGAARQSVAATAAARRRSEGGWASGGVRSFSRAAAA. The Thioredoxin domain maps to 57-215; that stretch reads IKVGDAIPAV…SLAPSIISQL (159 aa). Position 76 is an N6-acetyllysine (Lys76). N6-acetyllysine; alternate is present on Lys84. Lys84 carries the post-translational modification N6-succinyllysine; alternate. Catalysis depends on Cys101, which acts as the Cysteine sulfenic acid (-SOH) intermediate. The S-palmitoyl cysteine moiety is linked to residue Cys101. Cys101 and Cys205 are disulfide-bonded. An N6-succinyllysine modification is found at Lys117. Residues Ser172 and Ser183 each carry the phosphoserine modification. Residues 213–215 carry the Microbody targeting signal motif; the sequence is SQL.

The protein belongs to the peroxiredoxin family. Prx5 subfamily. Monomer. Post-translationally, S-palmitoylated. Palmitoylation occurs on the active site, inhibiting its reactivity; therefore PRDX5 palmitoylation status determines its antioxidant capacity. In terms of processing, S-palmitoylated. Depalmitoylated by ABHD10.

The protein resides in the mitochondrion. It localises to the cytoplasm. The protein localises to the peroxisome matrix. It carries out the reaction a hydroperoxide + [thioredoxin]-dithiol = an alcohol + [thioredoxin]-disulfide + H2O. Its function is as follows. Thiol-specific peroxidase that catalyzes the reduction of hydrogen peroxide and organic hydroperoxides to water and alcohols, respectively. Plays a role in cell protection against oxidative stress by detoxifying peroxides and as sensor of hydrogen peroxide-mediated signaling events. The protein is Peroxiredoxin-5, mitochondrial (PRDX5) of Chlorocebus aethiops (Green monkey).